Reading from the N-terminus, the 379-residue chain is PqqA peptide cyclase (379 aa).

The Radical SAM core domain occupies 8 to 220 (LPAPIGLLAE…IRVVEEARER (213 aa)). Cysteine 22, cysteine 26, and cysteine 29 together coordinate [4Fe-4S] cluster.

This sequence belongs to the radical SAM superfamily. PqqE family. Interacts with PqqD. The interaction is necessary for activity of PqqE. It depends on [4Fe-4S] cluster as a cofactor.

It catalyses the reaction [PQQ precursor protein] + S-adenosyl-L-methionine = E-Y cross-linked-[PQQ precursor protein] + 5'-deoxyadenosine + L-methionine + H(+). It functions in the pathway cofactor biosynthesis; pyrroloquinoline quinone biosynthesis. Catalyzes the cross-linking of a glutamate residue and a tyrosine residue in the PqqA protein as part of the biosynthesis of pyrroloquinoline quinone (PQQ). This is PqqA peptide cyclase from Methylobacterium sp. (strain 4-46).